A 97-amino-acid chain; its full sequence is Cystatin-A (97 aa).

The residue at position 1 (methionine 1) is an N-acetylmethionine. The Secondary area of contact signature appears at 46–50 (QVVAG).

It belongs to the cystatin family.

It localises to the cytoplasm. In terms of biological role, this is an intracellular thiol proteinase inhibitor. The polypeptide is Cystatin-A (Csta) (Mus musculus (Mouse)).